The following is a 285-amino-acid chain: Gas vesicle protein C2 (285 aa).

6 consecutive repeat copies span residues 22-52, 53-84, 85-122, 123-155, 156-188, and 189-220. The interval 22–220 is 6 X approximate tandem repeats; sequence EAMDAYAEEF…ADDTTAQTDV (199 aa).

The protein belongs to the halobacterial gas vesicle GvpC family.

The protein resides in the gas vesicle. Functionally, confers stability, involved in shaping gas vesicles (GV), hollow, gas filled proteinaceous nanostructures. GVs allow positioning of halobacteria at an optimal depth for growth in the poorly aerated, shallow brine pools of their habitat. Its function is as follows. Expression of 2 c-vac DNA fragments containing 2 divergently transcribed regions (gvpE-gvpF-gvpG-gvpH-gvpI-gvpJ-gvpK-gvpL-gvpM and gvpA-gvpC-gvpN-gvpO) allows H.volcanii to produce gas vesicles. The sequence is that of Gas vesicle protein C2 from Halobacterium salinarum (strain ATCC 700922 / JCM 11081 / NRC-1) (Halobacterium halobium).